A 457-amino-acid polypeptide reads, in one-letter code: Siroheme synthase (457 aa).

The segment at 1–204 is precorrin-2 dehydrogenase /sirohydrochlorin ferrochelatase; sequence MDHLPIFCQL…ADEKAVNATT (204 aa). NAD(+)-binding positions include 22–23 and 43–44; these read DV and LT. Ser128 bears the Phosphoserine mark. Residues 216–457 form a uroporphyrinogen-III C-methyltransferase region; sequence GEVVLVGAGP…RDKLNWFSNH (242 aa). Pro225 lines the S-adenosyl-L-methionine pocket. Asp248 serves as the catalytic Proton acceptor. The Proton donor role is filled by Lys270. Residues 301 to 303, Ile306, 331 to 332, Met382, and Gly411 contribute to the S-adenosyl-L-methionine site; these read GGD and TA.

It in the N-terminal section; belongs to the precorrin-2 dehydrogenase / sirohydrochlorin ferrochelatase family. This sequence in the C-terminal section; belongs to the precorrin methyltransferase family.

It catalyses the reaction uroporphyrinogen III + 2 S-adenosyl-L-methionine = precorrin-2 + 2 S-adenosyl-L-homocysteine + H(+). It carries out the reaction precorrin-2 + NAD(+) = sirohydrochlorin + NADH + 2 H(+). The enzyme catalyses siroheme + 2 H(+) = sirohydrochlorin + Fe(2+). It functions in the pathway cofactor biosynthesis; adenosylcobalamin biosynthesis; precorrin-2 from uroporphyrinogen III: step 1/1. Its pathway is cofactor biosynthesis; adenosylcobalamin biosynthesis; sirohydrochlorin from precorrin-2: step 1/1. It participates in porphyrin-containing compound metabolism; siroheme biosynthesis; precorrin-2 from uroporphyrinogen III: step 1/1. The protein operates within porphyrin-containing compound metabolism; siroheme biosynthesis; siroheme from sirohydrochlorin: step 1/1. It functions in the pathway porphyrin-containing compound metabolism; siroheme biosynthesis; sirohydrochlorin from precorrin-2: step 1/1. In terms of biological role, multifunctional enzyme that catalyzes the SAM-dependent methylations of uroporphyrinogen III at position C-2 and C-7 to form precorrin-2 via precorrin-1. Then it catalyzes the NAD-dependent ring dehydrogenation of precorrin-2 to yield sirohydrochlorin. Finally, it catalyzes the ferrochelation of sirohydrochlorin to yield siroheme. This Salmonella typhi protein is Siroheme synthase.